The sequence spans 208 residues: 3-demethoxyubiquinol 3-hydroxylase (208 aa).

Fe cation is bound by residues Glu-57, Glu-87, His-90, Glu-139, Glu-171, and His-174.

The protein belongs to the COQ7 family. Fe cation serves as cofactor.

The protein resides in the cell membrane. The enzyme catalyses a 5-methoxy-2-methyl-3-(all-trans-polyprenyl)benzene-1,4-diol + AH2 + O2 = a 3-demethylubiquinol + A + H2O. Its pathway is cofactor biosynthesis; ubiquinone biosynthesis. Catalyzes the hydroxylation of 2-nonaprenyl-3-methyl-6-methoxy-1,4-benzoquinol during ubiquinone biosynthesis. This Burkholderia cenocepacia (strain ATCC BAA-245 / DSM 16553 / LMG 16656 / NCTC 13227 / J2315 / CF5610) (Burkholderia cepacia (strain J2315)) protein is 3-demethoxyubiquinol 3-hydroxylase.